Here is a 205-residue protein sequence, read N- to C-terminus: ATP-dependent Clp protease proteolytic subunit (205 aa).

Ser-108 functions as the Nucleophile in the catalytic mechanism. The active site involves His-133.

This sequence belongs to the peptidase S14 family. In terms of assembly, fourteen ClpP subunits assemble into 2 heptameric rings which stack back to back to give a disk-like structure with a central cavity, resembling the structure of eukaryotic proteasomes.

The protein localises to the cytoplasm. It catalyses the reaction Hydrolysis of proteins to small peptides in the presence of ATP and magnesium. alpha-casein is the usual test substrate. In the absence of ATP, only oligopeptides shorter than five residues are hydrolyzed (such as succinyl-Leu-Tyr-|-NHMec, and Leu-Tyr-Leu-|-Tyr-Trp, in which cleavage of the -Tyr-|-Leu- and -Tyr-|-Trp bonds also occurs).. In terms of biological role, cleaves peptides in various proteins in a process that requires ATP hydrolysis. Has a chymotrypsin-like activity. Plays a major role in the degradation of misfolded proteins. The polypeptide is ATP-dependent Clp protease proteolytic subunit (Alcanivorax borkumensis (strain ATCC 700651 / DSM 11573 / NCIMB 13689 / SK2)).